Consider the following 391-residue polypeptide: G-patch domain-containing protein 1 (391 aa).

Positions 15 to 61 constitute a G-patch domain; it reads KDSAAFKLMKSMGWEEGEGLGKDKQGIKGYVRVTNKQDTSGVGLDKP. 2 disordered regions span residues 80 to 132 and 212 to 307; these read VQAA…EKGK and KASE…PAKR. 2 stretches are compositionally biased toward acidic residues: residues 92 to 102 and 265 to 295; these read DDSDKEDESED and NSDD…DDDK. The short motif at 305–312 is the Nuclear localization signal element; that stretch reads AKRKHDEI.

In terms of tissue distribution, strongly expressed in tissues with high cell proliferation activity that have a high demand for ribosome production such as shoot tips, leaves primordia, root tips and floral buds.

The protein resides in the nucleus. It is found in the nucleolus. Its function is as follows. Involved in ribosome biogenesis, required for normal progression of rRNA processing. Seems to promote cell proliferation in leaves. In Arabidopsis thaliana (Mouse-ear cress), this protein is G-patch domain-containing protein 1.